Consider the following 616-residue polypeptide: Dihydroxy-acid dehydratase (616 aa).

Aspartate 81 is a Mg(2+) binding site. Cysteine 122 is a binding site for [2Fe-2S] cluster. The Mg(2+) site is built by aspartate 123 and lysine 124. Residue lysine 124 is modified to N6-carboxylysine. Cysteine 195 serves as a coordination point for [2Fe-2S] cluster. Glutamate 491 contributes to the Mg(2+) binding site. The active-site Proton acceptor is the serine 517.

This sequence belongs to the IlvD/Edd family. Homodimer. It depends on [2Fe-2S] cluster as a cofactor. Requires Mg(2+) as cofactor.

It catalyses the reaction (2R)-2,3-dihydroxy-3-methylbutanoate = 3-methyl-2-oxobutanoate + H2O. It carries out the reaction (2R,3R)-2,3-dihydroxy-3-methylpentanoate = (S)-3-methyl-2-oxopentanoate + H2O. It participates in amino-acid biosynthesis; L-isoleucine biosynthesis; L-isoleucine from 2-oxobutanoate: step 3/4. The protein operates within amino-acid biosynthesis; L-valine biosynthesis; L-valine from pyruvate: step 3/4. Functions in the biosynthesis of branched-chain amino acids. Catalyzes the dehydration of (2R,3R)-2,3-dihydroxy-3-methylpentanoate (2,3-dihydroxy-3-methylvalerate) into 2-oxo-3-methylpentanoate (2-oxo-3-methylvalerate) and of (2R)-2,3-dihydroxy-3-methylbutanoate (2,3-dihydroxyisovalerate) into 2-oxo-3-methylbutanoate (2-oxoisovalerate), the penultimate precursor to L-isoleucine and L-valine, respectively. The sequence is that of Dihydroxy-acid dehydratase from Yersinia pseudotuberculosis serotype O:3 (strain YPIII).